Consider the following 67-residue polypeptide: Prokaryotic ubiquitin-like protein Pup (67 aa).

The interval 1 to 36 (MPQQFEQPQAQQAATQEDDALATTQAAAQTESADQA) is disordered. Positions 23 to 61 (TTQAAAQTESADQADVLDDILDDIESTLETNAEEYVNSF) are ARC ATPase binding. Glu-67 participates in a covalent cross-link: Isoglutamyl lysine isopeptide (Glu-Lys) (interchain with K-? in acceptor proteins).

The protein belongs to the prokaryotic ubiquitin-like protein family. As to quaternary structure, strongly interacts with the proteasome-associated ATPase ARC through a hydrophobic interface; the interacting region of Pup lies in its C-terminal half. There is one Pup binding site per ARC hexamer ring.

It participates in protein degradation; proteasomal Pup-dependent pathway. Its function is as follows. Protein modifier that is covalently attached to lysine residues of substrate proteins, thereby targeting them for proteasomal degradation. The tagging system is termed pupylation. This Bifidobacterium longum (strain DJO10A) protein is Prokaryotic ubiquitin-like protein Pup.